The following is a 258-amino-acid chain: NAD-dependent protein deacylase (258 aa).

The 256-residue stretch at Glu-3–Ala-258 folds into the Deacetylase sirtuin-type domain. Gly-28–Trp-48 contributes to the NAD(+) binding site. Residues Tyr-73 and Arg-76 each coordinate substrate. Residue Gln-109 to Asp-112 participates in NAD(+) binding. The active-site Proton acceptor is His-127. Residues Cys-135, Cys-138, Cys-161, and Cys-164 each contribute to the Zn(2+) site. NAD(+) contacts are provided by residues Gly-201–Ser-203 and Ala-245.

Belongs to the sirtuin family. Class III subfamily. Zn(2+) serves as cofactor.

The protein resides in the cytoplasm. The enzyme catalyses N(6)-acetyl-L-lysyl-[protein] + NAD(+) + H2O = 2''-O-acetyl-ADP-D-ribose + nicotinamide + L-lysyl-[protein]. The catalysed reaction is N(6)-succinyl-L-lysyl-[protein] + NAD(+) + H2O = 2''-O-succinyl-ADP-D-ribose + nicotinamide + L-lysyl-[protein]. Functionally, NAD-dependent lysine deacetylase and desuccinylase that specifically removes acetyl and succinyl groups on target proteins. Modulates the activities of several proteins which are inactive in their acylated form. The chain is NAD-dependent protein deacylase from Corynebacterium glutamicum (strain ATCC 13032 / DSM 20300 / JCM 1318 / BCRC 11384 / CCUG 27702 / LMG 3730 / NBRC 12168 / NCIMB 10025 / NRRL B-2784 / 534).